A 365-amino-acid polypeptide reads, in one-letter code: DNA replication and repair protein RecF (365 aa).

30 to 37 (GLNAQGKT) provides a ligand contact to ATP.

The protein belongs to the RecF family.

The protein localises to the cytoplasm. Its function is as follows. The RecF protein is involved in DNA metabolism; it is required for DNA replication and normal SOS inducibility. RecF binds preferentially to single-stranded, linear DNA. It also seems to bind ATP. The chain is DNA replication and repair protein RecF from Chlamydia trachomatis serovar L2b (strain UCH-1/proctitis).